A 308-amino-acid polypeptide reads, in one-letter code: Oxygen-dependent coproporphyrinogen-III oxidase (308 aa).

Serine 100 contributes to the substrate binding site. A divalent metal cation contacts are provided by histidine 104 and histidine 114. Residue histidine 114 is the Proton donor of the active site. A substrate-binding site is contributed by 116–118; the sequence is NFR. 2 residues coordinate a divalent metal cation: histidine 153 and histidine 183. The important for dimerization stretch occupies residues 248 to 283; it reads YVEFNLVFDRGTIFGLQSGGRTESILSSMPPMATWK. 266–268 serves as a coordination point for substrate; sequence GGR.

This sequence belongs to the aerobic coproporphyrinogen-III oxidase family. Homodimer. Requires a divalent metal cation as cofactor.

It localises to the cytoplasm. It carries out the reaction coproporphyrinogen III + O2 + 2 H(+) = protoporphyrinogen IX + 2 CO2 + 2 H2O. The protein operates within porphyrin-containing compound metabolism; protoporphyrin-IX biosynthesis; protoporphyrinogen-IX from coproporphyrinogen-III (O2 route): step 1/1. In terms of biological role, involved in the heme biosynthesis. Catalyzes the aerobic oxidative decarboxylation of propionate groups of rings A and B of coproporphyrinogen-III to yield the vinyl groups in protoporphyrinogen-IX. The chain is Oxygen-dependent coproporphyrinogen-III oxidase from Francisella tularensis subsp. holarctica (strain LVS).